The sequence spans 1689 residues: Cullin-7 (1689 aa).

A CPH domain is found at R349 to F422. The DOC domain occupies P793–A972. A compositionally biased stretch (basic and acidic residues) spans V1321 to A1337. Residues V1321–R1371 form a disordered region. Residues G1358–E1370 show a composition bias toward acidic residues. Residue K1567 forms a Glycyl lysine isopeptide (Lys-Gly) (interchain with G-Cter in NEDD8) linkage.

It belongs to the cullin family. As to quaternary structure, component of the 3M complex, composed of core components CUL7, CCDC8 and OBSL1. Component of the Cul7-RING(FBXW8) complex consisting of CUL7, RBX1, SKP1 and FBXW8. Within the Cul7-RING(FBXW8) complex interacts with FBXW8 and RBX1, but not with SKP1. Interacts with CUL1 (via the C-terminal domain); the interaction seems to be mediated by FBXW8; it is likely specific to FBXW8, but not other F-box proteins. Interacts (via the CPH domain) with p53/TP53; the interaction preferentially involves tetrameric and dimeric p53/TP53; this interaction recruits p53/TP53 for ubiquitination by neddylated CUL1-RBX1. The CUL7-CUL9 heterodimer seems to interact specifically with p53/TP53. Interacts with FBXW8; interaction is mutually exclusive of binding to CUL9 or p53/TP53. Interacts with CUL9; leading to inhibited CUL9 activity. Interacts with OBSL1. Interacts (as part of the 3M complex) with HDAC4 and HDAC5; it is negatively regulated by ANKRA2.

Its subcellular location is the cytoplasm. The protein localises to the cytoskeleton. It is found in the microtubule organizing center. It localises to the centrosome. The protein resides in the perinuclear region. Its subcellular location is the golgi apparatus. It functions in the pathway protein modification; protein ubiquitination. Functionally, core component of the 3M and Cul7-RING(FBXW8) complexes, which mediate the ubiquitination and subsequent proteasomal degradation of target proteins. Core component of the 3M complex, a complex required to regulate microtubule dynamics and genome integrity. It is unclear how the 3M complex regulates microtubules, it could act by controlling the level of a microtubule stabilizer. The Cul7-RING(FBXW8) complex alone lacks ubiquitination activity and does not promote polyubiquitination and proteasomal degradation of p53/TP53. However it mediates recruitment of p53/TP53 for ubiquitination by neddylated CUL1-RBX1. Interaction with CUL9 is required to inhibit CUL9 activity and ubiquitination of BIRC5. The Cul7-RING(FBXW8) complex also mediates ubiquitination and consequent degradation of target proteins such as GORASP1, IRS1 and MAP4K1/HPK1. Ubiquitination of GORASP1 regulates Golgi morphogenesis and dendrite patterning in brain. Mediates ubiquitination and degradation of IRS1 in a mTOR-dependent manner: the Cul7-RING(FBXW8) complex recognizes and binds IRS1 previously phosphorylated by S6 kinase (RPS6KB1 or RPS6KB2). The Cul7-RING(FBXW8) complex also mediates ubiquitination of MAP4K1/HPK1: recognizes and binds autophosphorylated MAP4K1/HPK1, leading to its degradation, thereby affecting cell proliferation and differentiation. Acts as a regulator in trophoblast cell epithelial-mesenchymal transition and placental development. While the Cul7-RING(FBXW8) and the 3M complexes are associated and involved in common processes, CUL7 and the Cul7-RING(FBXW8) complex may have additional functions. Probably plays a role in the degradation of proteins involved in endothelial proliferation and/or differentiation. The sequence is that of Cullin-7 (Cul7) from Mus musculus (Mouse).